Here is a 573-residue protein sequence, read N- to C-terminus: Delta 8-(E)-sphingolipid desaturase (573 aa).

Residues Ser2 to Asp77 form the Cytochrome b5 heme-binding domain. Heme contacts are provided by His37 and His60. A helical membrane pass occupies residues Leu228–Leu248. A Histidine box-1 motif is present at residues His260–His264. The chain crosses the membrane as a helical span at residues Val273–Trp293. The Histidine box-2 signature appears at His297 to His301. 3 helical membrane passes run Tyr353–Met372, Leu393–Pro413, and Val422–Ala442. The short motif at Gln481–His485 is the Histidine box-3 element.

Belongs to the fatty acid desaturase type 1 family.

The protein resides in the membrane. It carries out the reaction an N-acylsphing-4-enine + 2 Fe(II)-[cytochrome b5] + O2 + 2 H(+) = a (4E,8E)-4-sphinga-4,8-dienine ceramide + 2 Fe(III)-[cytochrome b5] + 2 H2O. The protein operates within lipid metabolism; sphingolipid metabolism. In terms of biological role, delta(8)-fatty-acid desaturase which introduces a double bond at the 8-position in the long-chain base (LCB) of ceramides. Required for the formation of the di-unsaturated sphingoid base (E,E)-sphinga-4,8-dienine during glucosylceramide (GluCer) biosynthesis. This Kluyveromyces lactis (strain ATCC 8585 / CBS 2359 / DSM 70799 / NBRC 1267 / NRRL Y-1140 / WM37) (Yeast) protein is Delta 8-(E)-sphingolipid desaturase.